The sequence spans 131 residues: Aspartate 1-decarboxylase (131 aa).

S25 (schiff-base intermediate with substrate; via pyruvic acid) is an active-site residue. Residue S25 is modified to Pyruvic acid (Ser). Position 57 (T57) interacts with substrate. Y58 serves as the catalytic Proton donor. 73-75 lines the substrate pocket; the sequence is GAA.

Belongs to the PanD family. Heterooctamer of four alpha and four beta subunits. Requires pyruvate as cofactor. In terms of processing, is synthesized initially as an inactive proenzyme, which is activated by self-cleavage at a specific serine bond to produce a beta-subunit with a hydroxyl group at its C-terminus and an alpha-subunit with a pyruvoyl group at its N-terminus.

Its subcellular location is the cytoplasm. The enzyme catalyses L-aspartate + H(+) = beta-alanine + CO2. It functions in the pathway cofactor biosynthesis; (R)-pantothenate biosynthesis; beta-alanine from L-aspartate: step 1/1. Catalyzes the pyruvoyl-dependent decarboxylation of aspartate to produce beta-alanine. The sequence is that of Aspartate 1-decarboxylase from Acaryochloris marina (strain MBIC 11017).